The sequence spans 309 residues: Protein RTM1 (309 aa).

7 helical membrane-spanning segments follow: residues 22-42 (AIALTVLFIVTTLIYSLQVVW), 83-103 (TFSAFIPLFFGCIMEIVGYIA), 119-139 (IQAVLLLIAPALYAATIYMLF), 162-182 (FFVFGDVVSFCLQAAGGGLMA), 193-213 (LITAGLVIQIVFFGVFIINEF), 233-253 (WWFLNLTLMLSSILIMVRSIV), and 278-298 (AVPMLLAAIVFIVGSFFGNIF).

It belongs to the lipid-translocating exporter (LTE) (TC 9.A.26.1) family.

It is found in the membrane. Functionally, confers resistance to molasses (to a particular toxic element present in some molasses). The protein is Protein RTM1 (RTM1) of Saccharomyces cerevisiae (Baker's yeast).